A 105-amino-acid chain; its full sequence is Cuticle protein AMP1A (105 aa).

The segment at 1–21 (DRDAQTLTDERSDQGDGNFRY) is disordered. A Chitin-binding type R&amp;R domain is found at 16–81 (DGNFRYEFET…PSSDLLPVGP (66 aa)).

In terms of tissue distribution, arthrodial membrane.

The chain is Cuticle protein AMP1A from Homarus americanus (American lobster).